A 473-amino-acid polypeptide reads, in one-letter code: Glycosyl hydrolase family 109 protein 2 (473 aa).

A signal peptide (tat-type signal) is located at residues 1–31 (MSIFSSRRQFLKSLGLAAGAAAAGNALPGKA). Residues 77 to 78 (GR), aspartate 99, 148 to 151 (WSSH), 168 to 169 (EV), and asparagine 197 each bind NAD(+). Substrate is bound by residues tyrosine 226, arginine 244, 256–259 (YPTH), and tyrosine 339. NAD(+) is bound at residue tyrosine 256.

This sequence belongs to the Gfo/Idh/MocA family. Glycosyl hydrolase 109 subfamily. Requires NAD(+) as cofactor. Post-translationally, predicted to be exported by the Tat system. The position of the signal peptide cleavage has not been experimentally proven.

Glycosidase. The chain is Glycosyl hydrolase family 109 protein 2 from Akkermansia muciniphila (strain ATCC BAA-835 / DSM 22959 / JCM 33894 / BCRC 81048 / CCUG 64013 / CIP 107961 / Muc).